A 350-amino-acid polypeptide reads, in one-letter code: MNVPDRKKALEAAIAYIEKQFGSGSIMSLGKHSATHEISTIKTGALSLDLALGIGGVPKGRIVEIFGPESSGKTTLATHIVANAQKMGGVAAYIDAEHALDPGYASLIGANINDLMISQPDCGEDALSIAELLARSGAVDVIVIDSVAALVPKSELEGDIGDVHVGLQARMMSQALRKLTATLARSQTCAIFINQIREKIGVSFGNPETTTGGRALKFYSSIRIDIRRIGAIKGNESFDLGNRIKVKVAKNKLAPPFRTAEFDILFNEGISSAGCILDLAVEHNIVEKKGSWFNYQDRKLGQGREAVREELKKNKKLFDELEKRILDVTSVPKATVVEEKKEEQSIQPVV.

67-74 contributes to the ATP binding site; that stretch reads GPESSGKT.

Belongs to the RecA family.

The protein resides in the cytoplasm. Its function is as follows. Can catalyze the hydrolysis of ATP in the presence of single-stranded DNA, the ATP-dependent uptake of single-stranded DNA by duplex DNA, and the ATP-dependent hybridization of homologous single-stranded DNAs. It interacts with LexA causing its activation and leading to its autocatalytic cleavage. The protein is Protein RecA of Chlamydia felis (strain Fe/C-56) (Chlamydophila felis).